The following is a 341-amino-acid chain: MVPAAGALLWVLLLNLGPRAAGAQGLTQTPTEMQRVSLRFGGPMTRSYRSTARTGLPRKTRIILEDENDAMADADRLAGPAAAELLAATVSTGFSRSSAINEEDGSSEEGVVINAGKDSTSRELPSATPNTAGSSSTRFIANSQEPEIRLTSSLPRSPGRSTEDLPGSQATLSQWSTPGSTPSRWPSPSPTAMPSPEDLRLVLMPWGPWHCHCKSGTMSRSRSGKLHGLSGRLRVGALSQLRTEHKPCTYQQCPCNRLREECPLDTSLCTDTNCASQSTTSTRTTTTPFPTIHLRSSPSLPPASPCPALAFWKRVRIGLEDIWNSLSSVFTEMQPIDRNQR.

The first 23 residues, 1–23 (MVPAAGALLWVLLLNLGPRAAGA), serve as a signal peptide directing secretion. Residues 115-196 (AGKDSTSREL…SPSPTAMPSP (82 aa)) are disordered. Positions 127-155 (ATPNTAGSSSTRFIANSQEPEIRLTSSLP) are enriched in polar residues.

In terms of processing, phosphorylation sites are present in the extracellular medium. In terms of tissue distribution, plasma. Overexpressed in lymphomas.

The protein resides in the secreted. Functionally, involved in control of cellular proliferation. Onconcogenic modifier contributing to the tumor suppressor function of DNMT3B. The protein is Protein MENT (MENT) of Homo sapiens (Human).